The primary structure comprises 54 residues: Photosystem II reaction center protein K (54 aa).

Residues 1–17 constitute a propeptide that is removed on maturation; sequence MFQISLDMISNKINLLG. The helical transmembrane segment at 29–49 threads the bilayer; that stretch reads IVDVLPIIPILFFLLAFVWQA.

The protein belongs to the PsbK family. As to quaternary structure, PSII is composed of 1 copy each of membrane proteins PsbA, PsbB, PsbC, PsbD, PsbE, PsbF, PsbH, PsbI, PsbJ, PsbK, PsbL, PsbM, PsbT, PsbY, PsbZ, Psb30/Ycf12, at least 3 peripheral proteins of the oxygen-evolving complex and a large number of cofactors. It forms dimeric complexes.

The protein localises to the plastid. It localises to the chloroplast thylakoid membrane. One of the components of the core complex of photosystem II (PSII). PSII is a light-driven water:plastoquinone oxidoreductase that uses light energy to abstract electrons from H(2)O, generating O(2) and a proton gradient subsequently used for ATP formation. It consists of a core antenna complex that captures photons, and an electron transfer chain that converts photonic excitation into a charge separation. This Euglena stellata protein is Photosystem II reaction center protein K.